The chain runs to 240 residues: PF03932 family protein CutC (240 aa).

The protein belongs to the CutC family.

It is found in the cytoplasm. The chain is PF03932 family protein CutC from Xanthomonas campestris pv. campestris (strain B100).